Reading from the N-terminus, the 106-residue chain is Large ribosomal subunit protein uL24 (106 aa).

This sequence belongs to the universal ribosomal protein uL24 family. As to quaternary structure, part of the 50S ribosomal subunit.

One of two assembly initiator proteins, it binds directly to the 5'-end of the 23S rRNA, where it nucleates assembly of the 50S subunit. Its function is as follows. One of the proteins that surrounds the polypeptide exit tunnel on the outside of the subunit. The chain is Large ribosomal subunit protein uL24 from Polaromonas sp. (strain JS666 / ATCC BAA-500).